A 66-amino-acid polypeptide reads, in one-letter code: Small vasohibin-binding protein (66 aa).

Over residues 1–23 (MDPPARKEKSKVKEPAFRVEKAK) the composition is skewed to basic and acidic residues. The segment at 1–30 (MDPPARKEKSKVKEPAFRVEKAKQKSAQQE) is disordered. Residues 5 to 52 (ARKEKSKVKEPAFRVEKAKQKSAQQELKQRQRAEIYALNRVMTELEQQ) adopt a coiled-coil conformation.

It belongs to the SVBP family. In terms of assembly, interacts with VASH1 and VASH2. As to expression, highly expressed in bone marrow, spleen and testis.

It localises to the cytoplasm. Its subcellular location is the secreted. The protein resides in the cytoskeleton. In terms of biological role, enhances the tyrosine carboxypeptidase activity of VASH1 and VASH2, thereby promoting the removal of the C-terminal tyrosine residue of alpha-tubulin. Also required to enhance the solubility and secretion of VASH1 and VASH2. Plays a role in axon and excitatory synapse formation. This is Small vasohibin-binding protein from Mus musculus (Mouse).